Reading from the N-terminus, the 190-residue chain is Potassium-transporting ATPase KdpC subunit (190 aa).

Residues 13–33 (VGFLLLTLMCGVVYPGIVTIF) traverse the membrane as a helical segment.

The protein belongs to the KdpC family. The system is composed of three essential subunits: KdpA, KdpB and KdpC.

It is found in the cell membrane. Functionally, part of the high-affinity ATP-driven potassium transport (or Kdp) system, which catalyzes the hydrolysis of ATP coupled with the electrogenic transport of potassium into the cytoplasm. This subunit acts as a catalytic chaperone that increases the ATP-binding affinity of the ATP-hydrolyzing subunit KdpB by the formation of a transient KdpB/KdpC/ATP ternary complex. This chain is Potassium-transporting ATPase KdpC subunit, found in Listeria monocytogenes serotype 4b (strain CLIP80459).